Consider the following 302-residue polypeptide: Protein TILLER ANGLE CONTROL 1 (302 aa).

The IGT motif signature appears at 57–63; sequence GILTIGT. 2 disordered regions span residues 82-115 and 159-180; these read ESEE…VEDE and EGSS…KNKK. Positions 99 to 115 are enriched in acidic residues; the sequence is DDDDDDDEHYDHSVEDE. A compositionally biased stretch (polar residues) spans 162-175; it reads SEISTKPDQSANDQ.

The protein belongs to the TAC family. In terms of tissue distribution, highly expressed in flower buds. Expressed in branch attachment sites, vegetative buds and young fruits.

Its function is as follows. Involved in the regulation of axillary shoot growth angle. Promotes horizontal shoot growth. This chain is Protein TILLER ANGLE CONTROL 1, found in Prunus persica (Peach).